The following is a 156-amino-acid chain: Myosin regulatory light chain, striated adductor muscle (156 aa).

Residue Ala1 is modified to Blocked amino end (Ala). EF-hand domains are found at residues 15-50 and 84-119; these read KQIQ…LGRT and DSEE…MGDN. Residues Asp28, Asp30, Asp32, and Asp39 each coordinate Ca(2+).

In molluscan muscle, calcium regulation is associated with myosin rather than with actin. Muscle myosin contains two types of light chains: the catalytic light chain, essential for ATPase activity, and the regulatory light chain, a calcium-binding protein responsible for Ca(2+) dependent binding and Ca(2+) dependent Mg-ATPase activity. The protein is Myosin regulatory light chain, striated adductor muscle of Chlamys nipponensis akazara (Akazara scallop).